The primary structure comprises 774 residues: MSKENIVTRENTAVSENAVSEPTVNNDVGASATNSVTHPAFTLNVRPDNIGIITIDVVGDKVNTLKAEFADQIATILQQAHALPKLQGLVIVSGKPDSFIAGADITMIAACRTAHDARVLAQKGQSILAQIAAFPVPVVAAIHGACLGGGLELALACHSRICSLDDKTVLGLPEVQLGLLPGSGGTQRLPRLVGVSKALDMILTGKQIRPRQALKMGLVDDVVPRDILLDVAIQRAKAGWLNRRALPWQERLLSGPLGKALLFRIVRKKTLAKTRGHYPAAERIIDVVRKGLDQGGPSGYEAEARAFGELAMSPQSAALRSLFFATTSLKKETGSAATARAIHRVGVLGGGLMGGGIANVTATRAGLPVRIKDINPQGINQALKYTWDALGKRVRSKRMRPTEQQRQMMLISGSTDYRGFERVDIVVEAVFEDLSLKQQMVADIERFGAAHTIFASNTSSLPISQIAALAQRPEQVIGLHYFSPVDKMPLVEVIPHEKTSEETIATTVALARKQGKTAIVVADRAGFYVNRILAPYINEAARCLLDGEPIESVDNALVDFGFPVGPMMLLDEVGIDVATKIMPILVEQLGPRFAAPPSFDVILKDGRKGRKNGRGFYLYSNPTKNSSPTKNGNSPAKRNSFKWRKNKVKPVDASIYTLLGVTPKAHLGAGVITQRCTMLMLNEAVRCLDESIIRNPRDGDIGAVFGIGFPPFLGGPFRYLDSLGADKVVQALRLLVQQYGERFEPCQRLVTMAEQQQQFYPVDANIDEVTDVAS.

Disordered stretches follow at residues 1–31 (MSKENIVTRENTAVSENAVSEPTVNNDVGAS) and 617–641 (YLYSNPTKNSSPTKNGNSPAKRNSF). Positions 1–224 (MSKENIVTRE…KMGLVDDVVP (224 aa)) are enoyl-CoA hydratase. Polar residues-rich tracts occupy residues 8–31 (TRENTAVSENAVSEPTVNNDVGAS) and 620–637 (SNPTKNSSPTKNGNSPAK). The interval 340–774 (RAIHRVGVLG…NIDEVTDVAS (435 aa)) is 3-hydroxyacyl-CoA dehydrogenase.

The protein in the N-terminal section; belongs to the enoyl-CoA hydratase/isomerase family. It in the central section; belongs to the 3-hydroxyacyl-CoA dehydrogenase family. Heterotetramer of two alpha chains (FadJ) and two beta chains (FadI).

The protein resides in the cytoplasm. The catalysed reaction is a (3S)-3-hydroxyacyl-CoA = a (2E)-enoyl-CoA + H2O. The enzyme catalyses a 4-saturated-(3S)-3-hydroxyacyl-CoA = a (3E)-enoyl-CoA + H2O. It carries out the reaction a (3S)-3-hydroxyacyl-CoA + NAD(+) = a 3-oxoacyl-CoA + NADH + H(+). It catalyses the reaction (3S)-3-hydroxybutanoyl-CoA = (3R)-3-hydroxybutanoyl-CoA. It participates in lipid metabolism; fatty acid beta-oxidation. Its function is as follows. Catalyzes the formation of a hydroxyacyl-CoA by addition of water on enoyl-CoA. Also exhibits 3-hydroxyacyl-CoA epimerase and 3-hydroxyacyl-CoA dehydrogenase activities. The protein is Fatty acid oxidation complex subunit alpha of Yersinia pestis (strain Pestoides F).